Here is a 430-residue protein sequence, read N- to C-terminus: Retinoic acid receptor RXR-alpha-A (430 aa).

Residues 1–20 (MHPSLLSPTSLGPSGSLHSP) show a composition bias toward low complexity. Disordered regions lie at residues 1-25 (MHPSLLSPTSLGPSGSLHSPISTLS) and 48-73 (ASPGVGYGPSISPQLNSHMNSVSSSE). The modulating stretch occupies residues 1–99 (MHPSLLSPTS…QPSGTPLSLT (99 aa)). The span at 58–72 (ISPQLNSHMNSVSSS) shows a compositional bias: polar residues. Residues 100–175 (KHICAICGDR…MGMKREAVQE (76 aa)) constitute a DNA-binding region (nuclear receptor). Positions 103, 106, 120, and 123 each coordinate Zn(2+). The NR C4-type zinc-finger motif lies at 103–123 (CAICGDRSSGKHYGVYSCEGC). A nuclear localization signal region spans residues 128 to 133 (KRTVRK). The Zn(2+) site is built by C139, C145, C155, and C158. An NR C4-type zinc finger spans residues 139 to 158 (CRDNKDCVIDKRQRNRCQYC). Residues 174 to 186 (QEERQRAKERSEN) show a composition bias toward basic and acidic residues. Residues 174–196 (QEERQRAKERSENEVESTSSANE) form a disordered region. The tract at residues 176–192 (ERQRAKERSENEVESTS) is hinge. Positions 195-426 (NEDMPVEKIL…TFLMEMLEAP (232 aa)) constitute an NR LBD domain. 9-cis-retinoate-binding residues include R284 and A295. Residues R284 and A295 each contribute to the all-trans-retinoate site. The tract at residues 316 to 336 (RVLTELVSKMRDMQMDKTELG) is required for nuclear export. Positions 415–426 (IDTFLMEMLEAP) are AF-2.

The protein belongs to the nuclear hormone receptor family. NR2 subfamily. Homodimer. Heterodimer; with a rar molecule. Binds DNA preferentially as a rar/rxr heterodimer.

The protein localises to the nucleus. Its function is as follows. Receptor for retinoic acid that acts as a transcription factor. Forms homo- or heterodimers with retinoic acid receptors (rars) and binds to target response elements in response to their ligands, all-trans or 9-cis retinoic acid, to regulate gene expression in various biological processes. The rar/rxr heterodimers bind to the retinoic acid response elements (RARE) composed of tandem 5'-AGGTCA-3' sites known as DR1-DR5 to regulate transcription. The high affinity ligand for rxrs is 9-cis retinoic acid. In the absence of ligand, the rar/rxr heterodimers associate with a multiprotein complex containing transcription corepressors that induce histone deacetylation, chromatin condensation and transcriptional suppression. On ligand binding, the corepressors dissociate from the receptors and coactivators are recruited leading to transcriptional activation. This is Retinoic acid receptor RXR-alpha-A from Danio rerio (Zebrafish).